The following is a 210-amino-acid chain: MKLPALHLLFLGFICLARSQDNDENVRRIMKEMEVIPEILDEPPRELLRIKYDNTIDIEEGKTYTPTELKFQPRLDWNADPESFYTVLMICPDAPNRENPMYRSWLHWLVVNVPGLDIMKGQPISEYFGPLPPKDSGIQRYLILVYQQSDKLDFDEKKMELSNADGHSNFDVMKFTQKYEMGSPVAGNIFQSRWDEYVPELMKTLYGVSE.

The first 19 residues, 1 to 19, serve as a signal peptide directing secretion; the sequence is MKLPALHLLFLGFICLARS.

The protein belongs to the phosphatidylethanolamine-binding protein family. In terms of tissue distribution, cells at the bases of a few scattered sensilla on the posterior surface of the antenna.

Its subcellular location is the secreted. The polypeptide is Putative odorant-binding protein A5 (a5) (Drosophila melanogaster (Fruit fly)).